Here is a 418-residue protein sequence, read N- to C-terminus: Gamma-glutamyl phosphate reductase (418 aa).

This sequence belongs to the gamma-glutamyl phosphate reductase family.

The protein localises to the cytoplasm. It carries out the reaction L-glutamate 5-semialdehyde + phosphate + NADP(+) = L-glutamyl 5-phosphate + NADPH + H(+). The protein operates within amino-acid biosynthesis; L-proline biosynthesis; L-glutamate 5-semialdehyde from L-glutamate: step 2/2. In terms of biological role, catalyzes the NADPH-dependent reduction of L-glutamate 5-phosphate into L-glutamate 5-semialdehyde and phosphate. The product spontaneously undergoes cyclization to form 1-pyrroline-5-carboxylate. This Teredinibacter turnerae (strain ATCC 39867 / T7901) protein is Gamma-glutamyl phosphate reductase.